Reading from the N-terminus, the 187-residue chain is UPF0398 protein LJ_1195 (187 aa).

The protein belongs to the UPF0398 family.

The polypeptide is UPF0398 protein LJ_1195 (Lactobacillus johnsonii (strain CNCM I-12250 / La1 / NCC 533)).